A 157-amino-acid chain; its full sequence is Phosphopantetheine adenylyltransferase (157 aa).

Residue T10 coordinates substrate. ATP is bound by residues 10 to 11 (TF) and H18. Substrate-binding residues include K42, L74, and R88. ATP-binding positions include 89 to 91 (GLR), E99, and 124 to 130 (NAFISSS).

It belongs to the bacterial CoaD family. Homohexamer. Mg(2+) serves as cofactor.

It is found in the cytoplasm. It carries out the reaction (R)-4'-phosphopantetheine + ATP + H(+) = 3'-dephospho-CoA + diphosphate. It participates in cofactor biosynthesis; coenzyme A biosynthesis; CoA from (R)-pantothenate: step 4/5. Reversibly transfers an adenylyl group from ATP to 4'-phosphopantetheine, yielding dephospho-CoA (dPCoA) and pyrophosphate. The chain is Phosphopantetheine adenylyltransferase from Helicobacter pylori (strain J99 / ATCC 700824) (Campylobacter pylori J99).